Reading from the N-terminus, the 391-residue chain is Saxitoxin and tetrodotoxin-binding protein 1 (391 aa).

Residues 1–20 (MGAVPGVVLLLMLAVLGIRA) form the signal peptide. Tandem repeats lie at residues 24 to 202 (PEEC…HKKS) and 203 to 391 (PEEC…PEQD). N-linked (GlcNAc...) asparagine glycans are attached at residues asparagine 54, asparagine 63, asparagine 97, asparagine 234, asparagine 268, asparagine 277, and asparagine 307.

As to quaternary structure, homodimer or heterodimer of PSTBP1 and PSTBP2. Post-translationally, glycosylated.

The protein resides in the secreted. In terms of biological role, binds both saxitoxin and tetradotoxin. May play a role in toxin accumulation and/or excretion. This is Saxitoxin and tetrodotoxin-binding protein 1 (psbp1) from Takifugu pardalis (Panther puffer).